A 405-amino-acid polypeptide reads, in one-letter code: Acetate kinase (405 aa).

N7 contacts Mg(2+). Residue K14 participates in ATP binding. R90 is a binding site for substrate. Catalysis depends on D147, which acts as the Proton donor/acceptor. ATP is bound by residues H207 to G211, D282 to R284, and G331 to N335. E384 lines the Mg(2+) pocket.

The protein belongs to the acetokinase family. In terms of assembly, homodimer. Mg(2+) serves as cofactor. Requires Mn(2+) as cofactor.

Its subcellular location is the cytoplasm. It carries out the reaction acetate + ATP = acetyl phosphate + ADP. It functions in the pathway metabolic intermediate biosynthesis; acetyl-CoA biosynthesis; acetyl-CoA from acetate: step 1/2. Its function is as follows. Catalyzes the formation of acetyl phosphate from acetate and ATP. Can also catalyze the reverse reaction. The sequence is that of Acetate kinase from Clostridium kluyveri (strain ATCC 8527 / DSM 555 / NBRC 12016 / NCIMB 10680 / K1).